A 156-amino-acid chain; its full sequence is Large ribosomal subunit protein bL17 (156 aa).

The interval 127 to 156 is disordered; that stretch reads RATRAAASKKAAEEKAAEAAEEKDEAAEEK. The span at 136–146 shows a compositional bias: basic and acidic residues; sequence KAAEEKAAEAA. Acidic residues predominate over residues 147 to 156; that stretch reads EEKDEAAEEK.

It belongs to the bacterial ribosomal protein bL17 family. Part of the 50S ribosomal subunit. Contacts protein L32.

This Corynebacterium urealyticum (strain ATCC 43042 / DSM 7109) protein is Large ribosomal subunit protein bL17.